A 573-amino-acid chain; its full sequence is MLO-like protein 2 (573 aa).

At 1-15 (MADQVKERTLEETST) the chain is on the extracellular side. A helical membrane pass occupies residues 16 to 36 (WAVAVVCFVLLFISIVLEHSI). The Cytoplasmic segment spans residues 37 to 61 (HKIGTWFKKKHKQALFEALEKVKAE). Residues 62 to 82 (LMLLGFISLLLTIGQTPISNI) traverse the membrane as a helical segment. Residues 83 to 164 (CISQKVASTM…VSAYGIHQLH (82 aa)) are Extracellular-facing. A helical transmembrane segment spans residues 165–185 (IFIFVLAVVHVVYCIVTYAFG). Topologically, residues 186-287 (KIKMRTWKSW…KYIQRSLEKD (102 aa)) are cytoplasmic. Residues 288–308 (FKTVVEISPVIWFVAVLFLLT) traverse the membrane as a helical segment. Over 309 to 317 (NSYGLRSYL) the chain is Extracellular. The chain crosses the membrane as a helical span at residues 318-338 (WLPFIPLVVILIVGTKLEVII). The Cytoplasmic segment spans residues 339 to 371 (TKLGLRIQEKGDVVRGAPVVQPGDDLFWFGKPR). The helical transmembrane segment at 372-392 (FILFLIHLVLFTNAFQLAFFA) threads the bilayer. Over 393–415 (WSTYEFNLNNCFHESTADVVIRL) the chain is Extracellular. Residues 416 to 436 (VVGAVVQILCSYVTLPLYALV) form a helical membrane-spanning segment. Residues 437–573 (TQMGSKMKPT…KSLRDFSFKK (137 aa)) lie on the Cytoplasmic side of the membrane. The calmodulin-binding stretch occupies residues 450 to 471 (DRVATALKKWHHTAKNETKHGR). The tract at residues 462–573 (TAKNETKHGR…KSLRDFSFKK (112 aa)) is disordered. Composition is skewed to polar residues over residues 473–490 (SGSN…THGS) and 498–513 (NFNN…SPSP). S512 carries the phosphoserine modification. The segment covering 522–548 (EHQFWDPESQHQEAETSTHHSLAHESS) has biased composition (basic and acidic residues).

It belongs to the MLO family.

It localises to the membrane. Its function is as follows. May be involved in modulation of pathogen defense and leaf cell death. Activity seems to be regulated by Ca(2+)-dependent calmodulin binding and seems not to require heterotrimeric G proteins. The polypeptide is MLO-like protein 2 (MLO2) (Arabidopsis thaliana (Mouse-ear cress)).